A 930-amino-acid polypeptide reads, in one-letter code: Isoleucine--tRNA ligase (930 aa).

Positions 57-67 (PYANGNIHVGH) match the 'HIGH' region motif. Glu-554 is a binding site for L-isoleucyl-5'-AMP. The 'KMSKS' region motif lies at 595 to 599 (KMSKS). Lys-598 is an ATP binding site. Zn(2+)-binding residues include Cys-888, Cys-891, Cys-908, and Cys-911.

The protein belongs to the class-I aminoacyl-tRNA synthetase family. IleS type 1 subfamily. Monomer. The cofactor is Zn(2+).

Its subcellular location is the cytoplasm. It carries out the reaction tRNA(Ile) + L-isoleucine + ATP = L-isoleucyl-tRNA(Ile) + AMP + diphosphate. Catalyzes the attachment of isoleucine to tRNA(Ile). As IleRS can inadvertently accommodate and process structurally similar amino acids such as valine, to avoid such errors it has two additional distinct tRNA(Ile)-dependent editing activities. One activity is designated as 'pretransfer' editing and involves the hydrolysis of activated Val-AMP. The other activity is designated 'posttransfer' editing and involves deacylation of mischarged Val-tRNA(Ile). The sequence is that of Isoleucine--tRNA ligase from Streptococcus pneumoniae (strain ATCC BAA-255 / R6).